A 253-amino-acid chain; its full sequence is 3-isopropylmalate dehydratase small subunit 3 (253 aa).

The transit peptide at 1-56 (MATSQQFLNPTLFKSLASSNKNSCTLCPSPFLQLKSASTIFNYKPLTSSSATIITR) directs the protein to the chloroplast.

The protein belongs to the LeuD family. Heterodimer of the large LEUC/IIL1 subunit and the small LEUD (SSU1, SSU2 or SSU3) subunits. Expressed in vascular bundles of roots, cotyledons and rosette leaves. Expressed in stem vascular bundles which branche off into lateral inflorescences. Expressed in connective tissues in anthers. In hypocotyls, expressed in parenchyma cells surrounding the vasculature. In rosette leaves, expressed in phloem cells and cells close to the xylem along the vascular bundles. In roots of adult plants, expressed in cells closely associated with the stele. In flowering stalks, expressed in parenchyma cells associated with the phloem or the xylem.

The protein localises to the plastid. Its subcellular location is the chloroplast stroma. The catalysed reaction is (2R,3S)-3-isopropylmalate = (2S)-2-isopropylmalate. It catalyses the reaction a 2-(omega-methylsulfanyl)alkylmalate = a 2-(omega-methylsulfanyl)alkylmaleate + H2O. The enzyme catalyses 2-(3-methylsulfanyl)propylmalate = 2-(2-methylsulfanyl)propylmaleate + H2O. It carries out the reaction a 3-(omega-methylsulfanyl)alkylmalate = a 2-(omega-methylsulfanyl)alkylmaleate + H2O. The catalysed reaction is 2-(2-methylsulfanyl)ethylmalate = 2-(2-methylsulfanyl)ethylmaleate + H2O. It catalyses the reaction 3-(2-methylsulfanyl)ethylmalate = 2-(2-methylsulfanyl)ethylmaleate + H2O. The enzyme catalyses 3-(3-methylsulfanyl)propylmalate = 2-(2-methylsulfanyl)propylmaleate + H2O. It participates in amino-acid biosynthesis; L-leucine biosynthesis; L-leucine from 3-methyl-2-oxobutanoate: step 2/4. Catalyzes the isomerization between 2-isopropylmalate and 3-isopropylmalate, via the formation of 2-isopropylmaleate. Functions redundantly with LEUD1 in the methionine chain elongation pathway of aliphatic glucosinolate formation. The polypeptide is 3-isopropylmalate dehydratase small subunit 3 (Arabidopsis thaliana (Mouse-ear cress)).